The following is a 530-amino-acid chain: Ubiquitin carboxyl-terminal hydrolase 17-like protein 13 (530 aa).

A USP domain is found at 80 to 375; it reads AGLQNMGNTC…QAYVLFYIQK (296 aa). C89 (nucleophile) is an active-site residue. The active-site Proton acceptor is the H334. 2 stretches are compositionally biased toward basic and acidic residues: residues 382-392 and 398-412; these read SESVSRGREPR and DTDRRATQGELKRDH. 2 disordered regions span residues 382–412 and 477–530; these read SESVSRGREPRALGAEDTDRRATQGELKRDH and NHHP…LVCQ. Over residues 493–505 the composition is skewed to polar residues; it reads TPTHQESMNTGTL. Over residues 510-524 the composition is skewed to basic residues; sequence GRARRSKGKNKHSKR.

The protein belongs to the peptidase C19 family. USP17 subfamily.

It localises to the nucleus. The protein localises to the endoplasmic reticulum. It carries out the reaction Thiol-dependent hydrolysis of ester, thioester, amide, peptide and isopeptide bonds formed by the C-terminal Gly of ubiquitin (a 76-residue protein attached to proteins as an intracellular targeting signal).. Functionally, deubiquitinating enzyme that removes conjugated ubiquitin from specific proteins to regulate different cellular processes that may include cell proliferation, progression through the cell cycle, apoptosis, cell migration, and the cellular response to viral infection. The chain is Ubiquitin carboxyl-terminal hydrolase 17-like protein 13 (USP17L13) from Homo sapiens (Human).